Reading from the N-terminus, the 148-residue chain is Ribonuclease H (148 aa).

Residues 1–142 (MSDSVEMFTD…ADQLANRGVD (142 aa)) form the RNase H type-1 domain. Positions 10, 48, 70, and 134 each coordinate Mg(2+).

This sequence belongs to the RNase H family. In terms of assembly, monomer. Mg(2+) is required as a cofactor.

The protein resides in the cytoplasm. It catalyses the reaction Endonucleolytic cleavage to 5'-phosphomonoester.. In terms of biological role, endonuclease that specifically degrades the RNA of RNA-DNA hybrids. The sequence is that of Ribonuclease H from Pseudomonas putida (strain ATCC 700007 / DSM 6899 / JCM 31910 / BCRC 17059 / LMG 24140 / F1).